A 622-amino-acid chain; its full sequence is Chaperone protein DnaK (622 aa).

Threonine 197 carries the post-translational modification Phosphothreonine; by autocatalysis. Basic and acidic residues-rich tracts occupy residues 515-528 (LHKE…EAVE) and 575-614 (ASKE…KKDD). Disordered stretches follow at residues 515–537 (LHKE…DSLV) and 575–622 (ASKE…AEVE).

The protein belongs to the heat shock protein 70 family.

Functionally, acts as a chaperone. The polypeptide is Chaperone protein DnaK (Campylobacter lari (strain RM2100 / D67 / ATCC BAA-1060)).